The sequence spans 481 residues: Glutamate--cysteine ligase (481 aa).

Belongs to the glutamate--cysteine ligase type 1 family. Type 1 subfamily.

The enzyme catalyses L-cysteine + L-glutamate + ATP = gamma-L-glutamyl-L-cysteine + ADP + phosphate + H(+). It participates in sulfur metabolism; glutathione biosynthesis; glutathione from L-cysteine and L-glutamate: step 1/2. The protein is Glutamate--cysteine ligase of Clostridium acetobutylicum (strain ATCC 824 / DSM 792 / JCM 1419 / IAM 19013 / LMG 5710 / NBRC 13948 / NRRL B-527 / VKM B-1787 / 2291 / W).